We begin with the raw amino-acid sequence, 829 residues long: DNA topoisomerase 1 (829 aa).

A disordered region spans residues 1–248; the sequence is MSEDHVQNDS…AKGNEEGVKK (248 aa). The segment covering 22 to 36 has biased composition (basic residues); it reads HKHKKDKEHRHKEHK. 3 stretches are compositionally biased toward basic and acidic residues: residues 37-58, 68-159, and 193-220; these read KDKD…SEKK, KHRE…EKMK, and KENK…DDKK. Interaction with DNA stretches follow at residues 481-482, 544-549, and 641-643; these read KY, RAGNEK, and TAK. One can recognise a Topo IB-type catalytic domain in the interval 488-821; that stretch reads SSRIKGEKDW…SIWQTTTSNF (334 aa). The O-(3'-phospho-DNA)-tyrosine intermediate role is filled by Y779.

It belongs to the type IB topoisomerase family. Monomer.

It localises to the nucleus. It carries out the reaction ATP-independent breakage of single-stranded DNA, followed by passage and rejoining.. Its function is as follows. Releases the supercoiling and torsional tension of DNA introduced during the DNA replication and transcription by transiently cleaving and rejoining one strand of the DNA duplex. Introduces a single-strand break via transesterification at a target site in duplex DNA. The scissile phosphodiester is attacked by the catalytic tyrosine of the enzyme, resulting in the formation of a DNA-(3'-phosphotyrosyl)-enzyme intermediate and the expulsion of a 5'-OH DNA strand. TThe free DNA strand then rotates around the intact phosphodiester bond on the opposing strand, thus removing DNA supercoils. Finally, in the religation step, the DNA 5'-OH attacks the covalent intermediate to expel the active-site tyrosine and restore the DNA phosphodiester backbone. May play a role in the circadian transcription of the core circadian clock component BMAL1. This is DNA topoisomerase 1 (top1) from Xenopus laevis (African clawed frog).